The chain runs to 315 residues: Taste receptor type 2 member 3 (315 aa).

Topologically, residues 1–5 are extracellular; the sequence is MGLTD. A helical transmembrane segment spans residues 6–26; that stretch reads GVFLIVCGAQFTLGILXNGFI. The Cytoplasmic portion of the chain corresponds to 27–41; the sequence is GLVNGRSWFKTKRMS. A helical membrane pass occupies residues 42-62; sequence LSDFIIATLALSRIILLCIIL. Residues 63-93 lie on the Extracellular side of the membrane; sequence TDSFLIVFSVKEHDSGIIMQLIDVFWTFTNH. Residues 94–114 form a helical membrane-spanning segment; that stretch reads LSIWFATCLGVLYCLKIASFS. The Cytoplasmic segment spans residues 115–127; the sequence is HPTFLWLKWRVSR. A helical membrane pass occupies residues 128-148; the sequence is VMVWMLLGALLLSCGSTASLI. Over 149 to 185 the chain is Extracellular; sequence NEFKLYSVLRGIEATRNVTEHFRKKRNEYYLIHVLGT. N165 is a glycosylation site (N-linked (GlcNAc...) asparagine). A helical transmembrane segment spans residues 186 to 206; sequence LWYLPPLVVSLASYFLLIFSL. Topologically, residues 207–233 are cytoplasmic; it reads GRHTRQMLQNSTSSRDPSTEAHKRAIR. Residues 234–254 form a helical membrane-spanning segment; sequence IILSFFFLFLLYFLAFLIASF. At 255 to 265 the chain is on the extracellular side; it reads GNFLPETKMAK. Residues 266–286 form a helical membrane-spanning segment; the sequence is MIGEVMTMFYPAGHSFIVILG. Residues 287–315 lie on the Cytoplasmic side of the membrane; the sequence is NSKLKQTFVEMLRCESGHLKPGSKGPIFS.

It belongs to the G-protein coupled receptor T2R family.

The protein localises to the membrane. Its function is as follows. Gustducin-coupled receptor implicated in the perception of bitter compounds in the oral cavity and the gastrointestinal tract. Signals through PLCB2 and the calcium-regulated cation channel TRPM5. In Papio hamadryas (Hamadryas baboon), this protein is Taste receptor type 2 member 3 (TAS2R3).